Here is a 289-residue protein sequence, read N- to C-terminus: tRNA pseudouridine synthase A (289 aa).

Asp-53 acts as the Nucleophile in catalysis. Tyr-119 lines the substrate pocket.

This sequence belongs to the tRNA pseudouridine synthase TruA family. As to quaternary structure, homodimer.

The catalysed reaction is uridine(38/39/40) in tRNA = pseudouridine(38/39/40) in tRNA. In terms of biological role, formation of pseudouridine at positions 38, 39 and 40 in the anticodon stem and loop of transfer RNAs. The chain is tRNA pseudouridine synthase A from Corynebacterium glutamicum (strain ATCC 13032 / DSM 20300 / JCM 1318 / BCRC 11384 / CCUG 27702 / LMG 3730 / NBRC 12168 / NCIMB 10025 / NRRL B-2784 / 534).